Consider the following 513-residue polypeptide: MVVKRILPLPRPAGLAPPTEVPLDGQDLAMPKMVMHCIWFFLASSQPSLESTSLQELEQAFTLGMQLFLARFPAAGARTRHDKDTARWYLEYNDQGADLEVIQLDRPLQDDWKALDGKCDSVFAPRPVMIFDDDASIFSIKVTRLSCGSVAISTSTHHWLVDFVGYIDLMEELSHCVSIFLNDPNAQINIDEGATKFDWSRDLLAYSKQLEPESIPSATWFTERGSPPQMTRAPSSCHYASLLFTQESLEKLKRSLAEWALETAPTTATDRIVPSKDNWIATNDALHALLWAAITDARGLDLNATTQLHTPLDGRRLLSSLSSADSQSRGKYIGNVHPGHVFPLPSSVVSAKDRSGLFNLAWLIRTQYLNVTPGQMSAIIRHHNYTDAETFGPGRLPKCTSMFGNDVTISNVARIPVRQRLDFGEKLGKPYTLTVVGMVPVTLNGLTLDSADGTCFIIQAPAEWTSKEAVLQHQPRSGDNQAPGGMLVYVGMRSEEMDKLLQNSLLQEFALVL.

The active-site Proton acceptor is the His158.

Belongs to the plant acyltransferase family.

It functions in the pathway secondary metabolite biosynthesis. In terms of biological role, acyltransferase; part of the gene cluster that mediates the biosynthesis of the glycolipid biosurfactant ustilagic acid (UA). UA is a secreted cellobiose glycolipid that is toxic for many microorganisms and confers biocontrol activity to U.maydis. UA consists of 15,16-dihydroxypalmitic or 2,15,16-trihydroxypalmitic acid, which is O-glycosidically linked to cellobiose at its terminal hydroxyl group. In addition, the cellobiose moiety is acetylated and acylated with a short-chain hydroxy fatty acid. UA biosynthesis starts with omega-hydroxylation of palmitic acid catalyzed by the cytochrome P450 monooxygenase cyp1. Terminal hydroxylation of palmitic acid precedes subterminal hydroxylation catalyzed by the cytochrome P450 monooxygenase cyp2. Sequential glucosylation of the hydroxy fatty acid is probably catalyzed by the glycosyltransferase ugt1. The cellobiose lipid is further decorated by acetylation of the proximal glucose residue and by acylation with a short-chain beta-hydroxy fatty acid at the distal glucose residue. The acyltransferase uat1 may be a good candidate for catalyzing either acetylation or acylation of the cellobiose lipid. The fatty acid synthase fas2 may be involved in synthesis of the carbon backbone of the short-chain beta-hydroxy fatty acid esterified to the cellobiose disaccharide. The secreted UA consists of a mixture of both alpha-hydroxylated and non-hydroxylated glycolipids; therefore, alpha-hydroxylation of the long-chain fatty, catalyzed by the fatty acid hydroxylase ahd1, occurs late in UA biosynthesis and may be the last step before secretion. The chain is Acyltransferase uat1 from Mycosarcoma maydis (Corn smut fungus).